The primary structure comprises 295 residues: ATP synthase gamma chain (295 aa).

It belongs to the ATPase gamma chain family. In terms of assembly, F-type ATPases have 2 components, CF(1) - the catalytic core - and CF(0) - the membrane proton channel. CF(1) has five subunits: alpha(3), beta(3), gamma(1), delta(1), epsilon(1). CF(0) has three main subunits: a, b and c.

The protein resides in the cell inner membrane. Produces ATP from ADP in the presence of a proton gradient across the membrane. The gamma chain is believed to be important in regulating ATPase activity and the flow of protons through the CF(0) complex. This chain is ATP synthase gamma chain, found in Campylobacter curvus (strain 525.92).